The primary structure comprises 196 residues: Pycsar effector protein GmPycTM (196 aa).

A run of 3 helical transmembrane segments spans residues 34 to 54, 82 to 102, and 176 to 196; these read ISFSLAFAGILLGGFFSSGII, ITTIVLVVFIILMIVSLTYLF, and VNWLIASTIVFIILNGMFLFL.

It localises to the cell inner membrane. In terms of biological role, pycsar (pyrimidine cyclase system for antiphage resistance) provides immunity against bacteriophage. The pyrimidine cyclase (PycC) synthesizes cyclic nucleotides in response to infection; these serve as specific second messenger signals. The signals activate the adjacent effector, leading to bacterial cell death and abortive phage infection. A clade C Pycsar system. The effector gene of a two-gene Pycsar system. Expression of this and adjacent uridylate cyclase GmPycC (AC P0DV42) probably confers resistance to bacteriophage. The genes are probably only expressed in response to bacteriophage infection. Probably only responds to cUMP (produced by its cognate NTP cyclase), acts by impairing membrane integrity. In Gulbenkiania mobilis, this protein is Pycsar effector protein GmPycTM.